Consider the following 353-residue polypeptide: Phosphoribosylformylglycinamidine cyclo-ligase (353 aa).

The protein belongs to the AIR synthase family.

It localises to the cytoplasm. The catalysed reaction is 2-formamido-N(1)-(5-O-phospho-beta-D-ribosyl)acetamidine + ATP = 5-amino-1-(5-phospho-beta-D-ribosyl)imidazole + ADP + phosphate + H(+). The protein operates within purine metabolism; IMP biosynthesis via de novo pathway; 5-amino-1-(5-phospho-D-ribosyl)imidazole from N(2)-formyl-N(1)-(5-phospho-D-ribosyl)glycinamide: step 2/2. This is Phosphoribosylformylglycinamidine cyclo-ligase from Pseudomonas aeruginosa (strain ATCC 15692 / DSM 22644 / CIP 104116 / JCM 14847 / LMG 12228 / 1C / PRS 101 / PAO1).